The chain runs to 367 residues: Tetraprenyl-beta-curcumene synthase (367 aa).

Belongs to the large terpene synthase family.

The enzyme catalyses all-trans-heptaprenyl diphosphate = (R)-tetraprenyl-beta-curcumene + diphosphate. Functionally, catalyzes the transformation of a linear C35 prenyl diphosphate chain to form tetraprenyl-beta-curcumene. This chain is Tetraprenyl-beta-curcumene synthase (ytpB), found in Bacillus subtilis (strain 168).